Consider the following 567-residue polypeptide: Urease subunit alpha (567 aa).

The Urease domain maps to 128–567 (GGIDAHVHFI…LPMSQRYFLF (440 aa)). Ni(2+) contacts are provided by His133, His135, and Lys216. An N6-carboxylysine modification is found at Lys216. His218 provides a ligand contact to substrate. The Ni(2+) site is built by His245 and His271. His319 (proton donor) is an active-site residue. Asp359 serves as a coordination point for Ni(2+).

The protein belongs to the metallo-dependent hydrolases superfamily. Urease alpha subunit family. In terms of assembly, heterotrimer of UreA (gamma), UreB (beta) and UreC (alpha) subunits. Three heterotrimers associate to form the active enzyme. The cofactor is Ni cation. In terms of processing, carboxylation allows a single lysine to coordinate two nickel ions.

The protein resides in the cytoplasm. It catalyses the reaction urea + 2 H2O + H(+) = hydrogencarbonate + 2 NH4(+). It functions in the pathway nitrogen metabolism; urea degradation; CO(2) and NH(3) from urea (urease route): step 1/1. In Blochmanniella pennsylvanica (strain BPEN), this protein is Urease subunit alpha.